The chain runs to 427 residues: Hydroxylamine reductase (427 aa).

C3, C6, C15, and C21 together coordinate [4Fe-4S] cluster. Positions 129, 153, 197, 283, 311, 336, 370, and 372 each coordinate hybrid [4Fe-2O-2S] cluster. C283 is modified (cysteine persulfide).

Belongs to the HCP family. Requires [4Fe-4S] cluster as cofactor. The cofactor is hybrid [4Fe-2O-2S] cluster.

The protein localises to the cytoplasm. The enzyme catalyses A + NH4(+) + H2O = hydroxylamine + AH2 + H(+). Its function is as follows. Catalyzes the reduction of hydroxylamine to form NH(3) and H(2)O. The sequence is that of Hydroxylamine reductase from Moorella thermoacetica (strain ATCC 39073 / JCM 9320).